Reading from the N-terminus, the 348-residue chain is Erlin-1 (348 aa).

The Cytoplasmic portion of the chain corresponds to 1 to 7 (MNMTQAR). The chain crosses the membrane as a helical span at residues 8 to 28 (VLVAAVVGLVAVLLYASIHKI). The Lumenal portion of the chain corresponds to 29 to 348 (EEGHLAVYYR…NVIQNKESTG (320 aa)). N108 is a glycosylation site (N-linked (GlcNAc...) asparagine). An N6-acetyllysine modification is found at K269. Residues 325–348 (SSLPSKEALEPSGENVIQNKESTG) are disordered. A compositionally biased stretch (polar residues) spans 339–348 (NVIQNKESTG).

Belongs to the band 7/mec-2 family. As to quaternary structure, forms a heteromeric complex with ERLIN2. In complex with ERLIN2, interacts with RNF170. Interacts with AMFR and SYVN1. Post-translationally, deubiquitinated by USP25; leading to stabilization. Expressed in heart, placenta, liver, kidney, pancreas, prostate, testis, ovary and small intestine.

It is found in the endoplasmic reticulum membrane. In terms of biological role, component of the ERLIN1/ERLIN2 complex which mediates the endoplasmic reticulum-associated degradation (ERAD) of inositol 1,4,5-trisphosphate receptors (IP3Rs). Involved in regulation of cellular cholesterol homeostasis by regulation the SREBP signaling pathway. Binds cholesterol and may promote ER retention of the SCAP-SREBF complex. (Microbial infection) Required early in hepatitis C virus (HCV) infection to initiate RNA replication, and later in the infection to support infectious virus production. The chain is Erlin-1 from Homo sapiens (Human).